Reading from the N-terminus, the 437-residue chain is Sulfate adenylyltransferase (437 aa).

Positions 303–314 are enriched in low complexity; it reads TVPSTPRPSSMT. Positions 303 to 322 are disordered; it reads TVPSTPRPSSMTKCQRAPWR.

This sequence belongs to the sulfate adenylyltransferase family.

It carries out the reaction sulfate + ATP + H(+) = adenosine 5'-phosphosulfate + diphosphate. It functions in the pathway sulfur metabolism; hydrogen sulfide biosynthesis; sulfite from sulfate: step 1/3. The chain is Sulfate adenylyltransferase (sat) from Riftia pachyptila sulfur-oxidizing endosymbiont.